A 563-amino-acid polypeptide reads, in one-letter code: Sulfite reductase [NADPH] hemoprotein beta-component (563 aa).

4 residues coordinate [4Fe-4S] cluster: Cys427, Cys433, Cys472, and Cys476. Cys476 is a siroheme binding site.

It belongs to the nitrite and sulfite reductase 4Fe-4S domain family. As to quaternary structure, alpha(8)-beta(8). The alpha component is a flavoprotein, the beta component is a hemoprotein. The cofactor is siroheme. [4Fe-4S] cluster is required as a cofactor.

It catalyses the reaction hydrogen sulfide + 3 NADP(+) + 3 H2O = sulfite + 3 NADPH + 4 H(+). It functions in the pathway sulfur metabolism; hydrogen sulfide biosynthesis; hydrogen sulfide from sulfite (NADPH route): step 1/1. Component of the sulfite reductase complex that catalyzes the 6-electron reduction of sulfite to sulfide. This is one of several activities required for the biosynthesis of L-cysteine from sulfate. The polypeptide is Sulfite reductase [NADPH] hemoprotein beta-component (Acidithiobacillus ferrooxidans (strain ATCC 53993 / BNL-5-31) (Leptospirillum ferrooxidans (ATCC 53993))).